A 179-amino-acid polypeptide reads, in one-letter code: Transcription factor BOA15 (179 aa).

The protein localises to the nucleus. Transcription factor that probably coregulates the gene clusters that mediates the biosynthesis of botcinin acid and its botcinin derivatives, acetate-derived polyketides that contribute to virulence when combined with the sesquiterpene botrydial. Botcinin acid and its derivatives have been shown to induce chlorosis and necrosis during host plant infection, but also have antifungal activities. The chain is Transcription factor BOA15 from Botryotinia fuckeliana (strain B05.10) (Noble rot fungus).